The primary structure comprises 473 residues: Photosystem II CP43 reaction center protein (473 aa).

The propeptide occupies 1-14; it reads MKILYSLRRFYHVE. Thr-15 bears the N-acetylthreonine mark. Thr-15 carries the phosphothreonine modification. Transmembrane regions (helical) follow at residues 69–93, 134–155, 178–200, 255–275, and 291–312; these read LFEV…PHLA, LLGP…KDRN, KALY…RKIT, KPFA…LSYS, and WFNN…ASQA. Glu-367 contacts [CaMn4O5] cluster. A helical transmembrane segment spans residues 447–471; the sequence is RARAAAAGFEKGIDRDLEPVLYMTP.

The protein belongs to the PsbB/PsbC family. PsbC subfamily. In terms of assembly, PSII is composed of 1 copy each of membrane proteins PsbA, PsbB, PsbC, PsbD, PsbE, PsbF, PsbH, PsbI, PsbJ, PsbK, PsbL, PsbM, PsbT, PsbX, PsbY, PsbZ, Psb30/Ycf12, at least 3 peripheral proteins of the oxygen-evolving complex and a large number of cofactors. It forms dimeric complexes. The cofactor is Binds multiple chlorophylls and provides some of the ligands for the Ca-4Mn-5O cluster of the oxygen-evolving complex. It may also provide a ligand for a Cl- that is required for oxygen evolution. PSII binds additional chlorophylls, carotenoids and specific lipids..

It is found in the plastid. It localises to the chloroplast thylakoid membrane. Functionally, one of the components of the core complex of photosystem II (PSII). It binds chlorophyll and helps catalyze the primary light-induced photochemical processes of PSII. PSII is a light-driven water:plastoquinone oxidoreductase, using light energy to abstract electrons from H(2)O, generating O(2) and a proton gradient subsequently used for ATP formation. The sequence is that of Photosystem II CP43 reaction center protein from Saccharum hybrid (Sugarcane).